We begin with the raw amino-acid sequence, 78 residues long: Small ribosomal subunit protein bS18 (78 aa).

Belongs to the bacterial ribosomal protein bS18 family. In terms of assembly, part of the 30S ribosomal subunit. Forms a tight heterodimer with protein bS6.

In terms of biological role, binds as a heterodimer with protein bS6 to the central domain of the 16S rRNA, where it helps stabilize the platform of the 30S subunit. The polypeptide is Small ribosomal subunit protein bS18 (Geobacillus kaustophilus (strain HTA426)).